A 607-amino-acid polypeptide reads, in one-letter code: DNA primase (607 aa).

Residues 39–63 (CPFHDDKNPSMSISSSKNIFKCWAC) form a CHC2-type zinc finger. Residues 267–350 (NQLFIVEGYF…IVEIVQWEHN (84 aa)) form the Toprim domain. Residues E273, D319, and D321 each contribute to the Mg(2+) site.

The protein belongs to the DnaG primase family. Monomer. Interacts with DnaB. Zn(2+) is required as a cofactor. The cofactor is Mg(2+).

The catalysed reaction is ssDNA + n NTP = ssDNA/pppN(pN)n-1 hybrid + (n-1) diphosphate.. Its function is as follows. RNA polymerase that catalyzes the synthesis of short RNA molecules used as primers for DNA polymerase during DNA replication. In Mycoplasma genitalium (strain ATCC 33530 / DSM 19775 / NCTC 10195 / G37) (Mycoplasmoides genitalium), this protein is DNA primase.